A 210-amino-acid polypeptide reads, in one-letter code: Outer-membrane lipoprotein LolB (210 aa).

The first 26 residues, 1 to 26 (MSKLKIDTKRRFSLLIALVLIISLSS), serve as a signal peptide directing secretion. C27 carries the N-palmitoyl cysteine lipid modification. C27 carries the S-diacylglycerol cysteine lipid modification.

It belongs to the LolB family. As to quaternary structure, monomer.

It is found in the cell outer membrane. Functionally, plays a critical role in the incorporation of lipoproteins in the outer membrane after they are released by the LolA protein. This Francisella tularensis subsp. holarctica (strain FTNF002-00 / FTA) protein is Outer-membrane lipoprotein LolB.